Reading from the N-terminus, the 104-residue chain is Large ribosomal subunit protein uL24 (104 aa).

It belongs to the universal ribosomal protein uL24 family. As to quaternary structure, part of the 50S ribosomal subunit.

One of two assembly initiator proteins, it binds directly to the 5'-end of the 23S rRNA, where it nucleates assembly of the 50S subunit. In terms of biological role, one of the proteins that surrounds the polypeptide exit tunnel on the outside of the subunit. The chain is Large ribosomal subunit protein uL24 from Aliivibrio fischeri (strain ATCC 700601 / ES114) (Vibrio fischeri).